The chain runs to 145 residues: Large-conductance mechanosensitive channel (145 aa).

The next 2 membrane-spanning stretches (helical) occupy residues 14-34 (VIDL…VNSL) and 83-103 (GAFL…FLLV).

Belongs to the MscL family. In terms of assembly, homopentamer.

It is found in the cell inner membrane. Functionally, channel that opens in response to stretch forces in the membrane lipid bilayer. May participate in the regulation of osmotic pressure changes within the cell. This is Large-conductance mechanosensitive channel from Paracoccus denitrificans (strain Pd 1222).